Here is a 95-residue protein sequence, read N- to C-terminus: Protein TusB (95 aa).

Belongs to the DsrH/TusB family. As to quaternary structure, heterohexamer, formed by a dimer of trimers. The hexameric TusBCD complex contains 2 copies each of TusB, TusC and TusD. The TusBCD complex interacts with TusE.

The protein resides in the cytoplasm. Its function is as follows. Part of a sulfur-relay system required for 2-thiolation of 5-methylaminomethyl-2-thiouridine (mnm(5)s(2)U) at tRNA wobble positions. The chain is Protein TusB from Shigella flexneri.